We begin with the raw amino-acid sequence, 343 residues long: Aspartate carbamoyltransferase catalytic subunit (343 aa).

Carbamoyl phosphate-binding residues include R91 and T92. Residue K119 coordinates L-aspartate. Carbamoyl phosphate contacts are provided by R141, H171, and Q174. Positions 204 and 259 each coordinate L-aspartate. Residues G300 and P301 each contribute to the carbamoyl phosphate site.

The protein belongs to the aspartate/ornithine carbamoyltransferase superfamily. ATCase family. In terms of assembly, heterododecamer (2C3:3R2) of six catalytic PyrB chains organized as two trimers (C3), and six regulatory PyrI chains organized as three dimers (R2).

It carries out the reaction carbamoyl phosphate + L-aspartate = N-carbamoyl-L-aspartate + phosphate + H(+). It participates in pyrimidine metabolism; UMP biosynthesis via de novo pathway; (S)-dihydroorotate from bicarbonate: step 2/3. Catalyzes the condensation of carbamoyl phosphate and aspartate to form carbamoyl aspartate and inorganic phosphate, the committed step in the de novo pyrimidine nucleotide biosynthesis pathway. The sequence is that of Aspartate carbamoyltransferase catalytic subunit from Burkholderia multivorans (strain ATCC 17616 / 249).